Reading from the N-terminus, the 302-residue chain is N-acetylaspartate synthetase (302 aa).

Pro residues predominate over residues 46–60 (PGPAAAPPAPPPAPV). The interval 46-72 (PGPAAAPPAPPPAPVAQPHGGAGGAGP) is disordered. Residues 121–141 (YALLAALCFAVSRSLLLTCLV) form a helical membrane-spanning segment. Positions 143–283 (AALLGLRYYY…VLPGMTLSLA (141 aa)) constitute an N-acetyltransferase domain.

The protein belongs to the NAT8 family. In terms of tissue distribution, expressed in brain.

Its subcellular location is the cytoplasm. It localises to the microsome membrane. It is found in the mitochondrion membrane. The protein localises to the endoplasmic reticulum membrane. It catalyses the reaction L-aspartate + acetyl-CoA = N-acetyl-L-aspartate + CoA + H(+). Its activity is regulated as follows. Aminooxyacetic acid (AOAA) blocks its activity in both cytoplasm and mitochondria. Its function is as follows. Catalyzes the synthesis of N-acetylaspartate acid (NAA) from L-aspartate and acetyl-CoA. Promotes dopamine uptake by regulating TNF-alpha expression. Attenuates methamphetamine-induced inhibition of dopamine uptake. In Homo sapiens (Human), this protein is N-acetylaspartate synthetase.